The sequence spans 154 residues: tRNA (cytidine(34)-2'-O)-methyltransferase (154 aa).

4 residues coordinate S-adenosyl-L-methionine: L78, G100, L122, and S130.

This sequence belongs to the class IV-like SAM-binding methyltransferase superfamily. RNA methyltransferase TrmH family. TrmL subfamily. Homodimer.

Its subcellular location is the cytoplasm. It carries out the reaction cytidine(34) in tRNA + S-adenosyl-L-methionine = 2'-O-methylcytidine(34) in tRNA + S-adenosyl-L-homocysteine + H(+). The enzyme catalyses 5-carboxymethylaminomethyluridine(34) in tRNA(Leu) + S-adenosyl-L-methionine = 5-carboxymethylaminomethyl-2'-O-methyluridine(34) in tRNA(Leu) + S-adenosyl-L-homocysteine + H(+). Functionally, methylates the ribose at the nucleotide 34 wobble position in the two leucyl isoacceptors tRNA(Leu)(CmAA) and tRNA(Leu)(cmnm5UmAA). Catalyzes the methyl transfer from S-adenosyl-L-methionine to the 2'-OH of the wobble nucleotide. The chain is tRNA (cytidine(34)-2'-O)-methyltransferase from Methylovorus glucosotrophus (strain SIP3-4).